The chain runs to 543 residues: Glutamyl-tRNA(Gln) amidotransferase subunit A, chloroplastic/mitochondrial (543 aa).

Residues lysine 123 and serine 198 each act as charge relay system in the active site. Serine 222 acts as the Acyl-ester intermediate in catalysis.

The protein belongs to the amidase family. GatA subfamily. Subunit of the heterotrimeric GatCAB amidotransferase (AdT) complex, composed of A, B and C subunits.

The protein resides in the mitochondrion. Its subcellular location is the plastid. It is found in the chloroplast stroma. The catalysed reaction is L-glutamyl-tRNA(Gln) + L-glutamine + ATP + H2O = L-glutaminyl-tRNA(Gln) + L-glutamate + ADP + phosphate + H(+). Functionally, allows the formation of correctly charged Gln-tRNA(Gln) through the transamidation of misacylated Glu-tRNA(Gln) in chloroplasts and mitochondria. The reaction takes place in the presence of glutamine and ATP through an activated gamma-phospho-Glu-tRNA(Gln). This Oryza sativa subsp. indica (Rice) protein is Glutamyl-tRNA(Gln) amidotransferase subunit A, chloroplastic/mitochondrial.